The following is a 253-amino-acid chain: Glucosamine-6-phosphate deaminase (253 aa).

The active-site Proton acceptor; for enolization step is the aspartate 65. Asparagine 133 acts as the For ring-opening step in catalysis. Histidine 135 acts as the Proton acceptor; for ring-opening step in catalysis. Glutamate 140 (for ring-opening step) is an active-site residue.

The protein belongs to the glucosamine/galactosamine-6-phosphate isomerase family. NagB subfamily.

It carries out the reaction alpha-D-glucosamine 6-phosphate + H2O = beta-D-fructose 6-phosphate + NH4(+). It functions in the pathway amino-sugar metabolism; N-acetylneuraminate degradation; D-fructose 6-phosphate from N-acetylneuraminate: step 5/5. Its function is as follows. Catalyzes the reversible isomerization-deamination of glucosamine 6-phosphate (GlcN6P) to form fructose 6-phosphate (Fru6P) and ammonium ion. The polypeptide is Glucosamine-6-phosphate deaminase (Corynebacterium glutamicum (strain ATCC 13032 / DSM 20300 / JCM 1318 / BCRC 11384 / CCUG 27702 / LMG 3730 / NBRC 12168 / NCIMB 10025 / NRRL B-2784 / 534)).